Consider the following 296-residue polypeptide: 4-hydroxy-tetrahydrodipicolinate synthase (296 aa).

Thr49 contacts pyruvate. Tyr137 functions as the Proton donor/acceptor in the catalytic mechanism. Lys166 acts as the Schiff-base intermediate with substrate in catalysis. Val208 serves as a coordination point for pyruvate.

This sequence belongs to the DapA family. In terms of assembly, homotetramer; dimer of dimers.

It localises to the cytoplasm. The enzyme catalyses L-aspartate 4-semialdehyde + pyruvate = (2S,4S)-4-hydroxy-2,3,4,5-tetrahydrodipicolinate + H2O + H(+). Its pathway is amino-acid biosynthesis; L-lysine biosynthesis via DAP pathway; (S)-tetrahydrodipicolinate from L-aspartate: step 3/4. Catalyzes the condensation of (S)-aspartate-beta-semialdehyde [(S)-ASA] and pyruvate to 4-hydroxy-tetrahydrodipicolinate (HTPA). In Desulforamulus reducens (strain ATCC BAA-1160 / DSM 100696 / MI-1) (Desulfotomaculum reducens), this protein is 4-hydroxy-tetrahydrodipicolinate synthase.